A 1098-amino-acid chain; its full sequence is PAN2-PAN3 deadenylation complex catalytic subunit PAN2 (1098 aa).

4 WD repeats span residues 19-58, 150-190, 253-293, and 300-338; these read ASKD…PFQL, TGFD…SVKS, PFPN…KLNV, and PASP…NFVN. The linker stretch occupies residues 340–466; the sequence is PAPLEEQDIP…SIFHLKSPTS (127 aa). A disordered region spans residues 417–442; the sequence is RNISQPYQSLREPPGSNSNAPRFISE. Positions 466–839 constitute a USP domain; it reads SVPHCYSRLQ…KPVIIVYSEP (374 aa). In terms of domain architecture, Exonuclease spans 894–1067; sequence IAIDAEFVVS…EDAYTALMLF (174 aa). Residues Asp897, Glu899, Asp1006, and Asp1059 each contribute to the a divalent metal cation site.

It belongs to the peptidase C19 family. PAN2 subfamily. As to quaternary structure, forms a heterotrimer with an asymmetric homodimer of the regulatory subunit PAN3 to form the poly(A)-nuclease (PAN) deadenylation complex. It depends on a divalent metal cation as a cofactor.

The protein resides in the cytoplasm. It carries out the reaction Exonucleolytic cleavage of poly(A) to 5'-AMP.. With respect to regulation, positively regulated by the regulatory subunit PAN3. Catalytic subunit of the poly(A)-nuclease (PAN) deadenylation complex, one of two cytoplasmic mRNA deadenylases involved in mRNA turnover. PAN specifically shortens poly(A) tails of RNA and the activity is stimulated by poly(A)-binding protein PAB1. PAN deadenylation is followed by rapid degradation of the shortened mRNA tails by the CCR4-NOT complex. Deadenylated mRNAs are then degraded by two alternative mechanisms, namely exosome-mediated 3'-5' exonucleolytic degradation, or deadenylation-dependent mRNA decaping and subsequent 5'-3' exonucleolytic degradation by XRN1. May also be involved in post-transcriptional maturation of mRNA poly(A) tails. This is PAN2-PAN3 deadenylation complex catalytic subunit PAN2 from Meyerozyma guilliermondii (strain ATCC 6260 / CBS 566 / DSM 6381 / JCM 1539 / NBRC 10279 / NRRL Y-324) (Yeast).